The following is a 197-amino-acid chain: MLERIKDSFTESIQTKIDAAEALPESIAKAAEMMVHCLLGGNKILACGNGGSAGDAQHFSAELLNRYEIERPPLPAIALSTDTSTITAIANDYSYDEIFSKQIFALGQPGDILLAISTSGNSGNVIKAMEAALSRDMTIVALTGKDGGAMAGLLSVGDVEIRVPSNVTARIQEVHLLVIHCLCDNIDRTLFPQDEQQ.

One can recognise an SIS domain in the interval 34–196 (MVHCLLGGNK…DRTLFPQDEQ (163 aa)). 49-51 (NGG) is a binding site for substrate. Zn(2+) contacts are provided by His58 and Glu62. Residues Glu62, 91–92 (ND), 117–119 (STS), Ser122, and Gln172 contribute to the substrate site. 2 residues coordinate Zn(2+): Gln172 and His180.

This sequence belongs to the SIS family. GmhA subfamily. Homotetramer. Zn(2+) serves as cofactor.

The protein localises to the cytoplasm. The catalysed reaction is 2 D-sedoheptulose 7-phosphate = D-glycero-alpha-D-manno-heptose 7-phosphate + D-glycero-beta-D-manno-heptose 7-phosphate. Its pathway is carbohydrate biosynthesis; D-glycero-D-manno-heptose 7-phosphate biosynthesis; D-glycero-alpha-D-manno-heptose 7-phosphate and D-glycero-beta-D-manno-heptose 7-phosphate from sedoheptulose 7-phosphate: step 1/1. Catalyzes the isomerization of sedoheptulose 7-phosphate in D-glycero-D-manno-heptose 7-phosphate. This is Phosphoheptose isomerase from Shewanella baltica (strain OS223).